A 562-amino-acid polypeptide reads, in one-letter code: Phosphatidylinositol 4-phosphate 5-kinase type-1 alpha (562 aa).

The PIPK domain maps to T81 to V449. K103 is covalently cross-linked (Glycyl lysine isopeptide (Lys-Gly) (interchain with G-Cter in ubiquitin)). The residue at position 486 (S486) is a Phosphoserine. The disordered stretch occupies residues H506–S526.

Interacts with RAC1. Interacts with TUT1. Forms a complex with CDH1/E-cadherin, CTNNB1/beta-catenin and CTNND1 at the plasma membrane upon calcium stimulation. Found in a ternary complex with IRS1 and DGKZ in the absence of insulin stimulation. Interacts with DGKZ. Interacts with PIP4K2C; the interaction inhibits PIP5K1A kinase activity. As to expression, highly expressed in heart, placenta, skeletal muscle, kidney and pancreas. Detected at lower levels in brain, lung and liver.

The protein localises to the cell membrane. The protein resides in the cytoplasm. It localises to the nucleus. Its subcellular location is the nucleus speckle. It is found in the cell projection. The protein localises to the ruffle. The protein resides in the lamellipodium. The enzyme catalyses a 1,2-diacyl-sn-glycero-3-phospho-(1D-myo-inositol 4-phosphate) + ATP = a 1,2-diacyl-sn-glycero-3-phospho-(1D-myo-inositol-4,5-bisphosphate) + ADP + H(+). It catalyses the reaction 1-octadecanoyl-2-(5Z,8Z,11Z,14Z)-eicosatetraenoyl-sn-glycero-3-phospho-1D-myo-inositol 4-phosphate + ATP = 1-octadecanoyl-2-(5Z,8Z,11Z,14Z)-eicosatetraenoyl-sn-glycero-3-phospho-1D-myo-inositol 4,5-bisphosphate + ADP + H(+). It carries out the reaction 1,2-dihexadecanoyl-sn-glycero-3-phospho-(1D-myo-inositol-4-phosphate) + ATP = 1,2-dihexadecanoyl-sn-glycero-3-phospho-(1D-myo-inositol-4,5-bisphosphate) + ADP + H(+). The catalysed reaction is 1-octadecanoyl-2-(9Z)-octadecenoyl-sn-glycero-3-phospho-1D-myo-inositol 4-phosphate + ATP = 1-octadecanoyl-2-(9Z)-octadecenoyl-sn-glycero-3-phospho-1D-myo-inositol 4,5-bisphosphate + ADP + H(+). The enzyme catalyses 1-octadecanoyl-2-(9Z)-octadecenoyl-sn-glycero-3-phospho-1D-myo-inositol + ATP = 1-octadecanoyl-2-(9Z)-octadecenoyl-sn-glycero-3-phospho-1D-myo-inositol 5-phosphate + ADP + H(+). It catalyses the reaction 1-octadecanoyl-2-(9Z,12Z)-octadecadienoyl-sn-glycero-3-phospho-1D-myo-inositol + ATP = 1-octadecanoyl-2-(9Z,12Z)-octadecadienoyl-sn-glycero-3-phospho-1D-myo-inositol 5-phosphate + ADP + H(+). It carries out the reaction 1-octadecanoyl-2-(5Z,8Z,11Z,14Z-eicosatetraenoyl)-sn-glycero-3-phospho-(1D-myo-inositol) + ATP = 1-octadecanoyl-2-(5Z,8Z,11Z,14Z)-eicosatetraenoyl-sn-glycero-3-phospho-1D-myo-inositol 5-phosphate + ADP + H(+). The catalysed reaction is 1,2-di-(9Z,12Z)-octadecadienoyl-sn-glycero-3-phospho-1D-myo-inositol + ATP = 1,2-di(9Z,12Z)-octadecadienoyl-sn-glycero-3-phospho-1D-myo-inositol 5-phosphate + ADP + H(+). With respect to regulation, activated by diarachidonoyl phosphatidic acid (DAPA), when 1,2-dipalmitoyl-PI4P is used as a substrate. In terms of biological role, catalyzes the phosphorylation of phosphatidylinositol 4-phosphate (PtdIns(4)P/PI4P) to form phosphatidylinositol 4,5-bisphosphate (PtdIns(4,5)P2/PIP2), a lipid second messenger that regulates several cellular processes such as signal transduction, vesicle trafficking, actin cytoskeleton dynamics, cell adhesion, and cell motility. PtdIns(4,5)P2 can directly act as a second messenger or can be utilized as a precursor to generate other second messengers: inositol 1,4,5-trisphosphate (IP3), diacylglycerol (DAG) or phosphatidylinositol-3,4,5-trisphosphate (PtdIns(3,4,5)P3/PIP3). PIP5K1A-mediated phosphorylation of PtdIns(4)P is the predominant pathway for PtdIns(4,5)P2 synthesis. Can also use phosphatidylinositol (PtdIns) as substrate in vitro. Together with PIP5K1C, is required for phagocytosis, both enzymes regulating different types of actin remodeling at sequential steps. Promotes particle ingestion by activating the WAS GTPase-binding protein that induces Arp2/3 dependent actin polymerization at the nascent phagocytic cup. Together with PIP5K1B, is required, after stimulation by G-protein coupled receptors, for the synthesis of IP3 that will induce stable platelet adhesion. Recruited to the plasma membrane by the E-cadherin/beta-catenin complex where it provides the substrate PtdIns(4,5)P2 for the production of PtdIns(3,4,5)P3, IP3 and DAG, that will mobilize internal calcium and drive keratinocyte differentiation. Positively regulates insulin-induced translocation of SLC2A4 to the cell membrane in adipocytes. Together with PIP5K1C has a role during embryogenesis. Independently of its catalytic activity, is required for membrane ruffling formation, actin organization and focal adhesion formation during directional cell migration by controlling integrin-induced translocation of the small GTPase RAC1 to the plasma membrane. Also functions in the nucleus where it acts as an activator of TUT1 adenylyltransferase activity in nuclear speckles, thereby regulating mRNA polyadenylation of a select set of mRNAs. The sequence is that of Phosphatidylinositol 4-phosphate 5-kinase type-1 alpha from Homo sapiens (Human).